Consider the following 176-residue polypeptide: RNA pyrophosphohydrolase (176 aa).

The Nudix hydrolase domain occupies 6 to 149 (GYRPNVGIVI…KRDVYRRVMK (144 aa)). Positions 38–59 (GGINPGESAEQAMYRELFEEVG) match the Nudix box motif.

Belongs to the Nudix hydrolase family. RppH subfamily. The cofactor is a divalent metal cation.

In terms of biological role, accelerates the degradation of transcripts by removing pyrophosphate from the 5'-end of triphosphorylated RNA, leading to a more labile monophosphorylated state that can stimulate subsequent ribonuclease cleavage. This chain is RNA pyrophosphohydrolase, found in Escherichia fergusonii (strain ATCC 35469 / DSM 13698 / CCUG 18766 / IAM 14443 / JCM 21226 / LMG 7866 / NBRC 102419 / NCTC 12128 / CDC 0568-73).